The sequence spans 297 residues: ClpXP adapter protein SpxH (297 aa).

The protein belongs to the SpxH family. As to quaternary structure, interacts with Spx.

It localises to the cytoplasm. Functionally, adapter protein required for efficient degradation of Spx by ClpXP under non-stress conditions. Interaction with Spx stabilizes Spx and exposes the C-terminus of Spx for recognition and proteolysis by ClpXP. The polypeptide is ClpXP adapter protein SpxH (Bacillus thuringiensis subsp. konkukian (strain 97-27)).